Reading from the N-terminus, the 422-residue chain is Glycine amidinotransferase, mitochondrial (422 aa).

Active-site residues include Asp253 and His302. Cys406 serves as the catalytic Amidino-cysteine intermediate.

Belongs to the amidinotransferase family. As to quaternary structure, homodimer. Strongly expressed in neurons and glia of the brain, the lamina propria, submucosa and serosa of the small intestine, in oocytes and on the fringes of the pancreas. Not expressed in the retina, eye lens, heart or bulbus arteriosus. Expressed in the yolk syncytial layer in gastrula stage embryos, in the yolk syncytial layer and mature somites in early segmentation embryos and in the yolk syncytial layer and the liver of long-pec stage (48 hours post-fertilization) embryos.

The protein localises to the mitochondrion inner membrane. The enzyme catalyses L-arginine + glycine = guanidinoacetate + L-ornithine. The protein operates within amine and polyamine biosynthesis; creatine biosynthesis; creatine from L-arginine and glycine: step 1/2. Its function is as follows. Catalyzes the biosynthesis of guanidinoacetate, the immediate precursor of creatine. Creatine plays a vital role in energy metabolism in muscle tissues. May play a role in embryonic and central nervous system development. In Danio rerio (Zebrafish), this protein is Glycine amidinotransferase, mitochondrial.